Here is a 153-residue protein sequence, read N- to C-terminus: Putative ubiquitin-conjugating enzyme E2 N-like (153 aa).

One can recognise a UBC core domain in the interval 3 to 150 (ELPHRIIKET…ARAWTRLYAM (148 aa)). N6-acetyllysine is present on K83.

This sequence belongs to the ubiquitin-conjugating enzyme family. In terms of tissue distribution, expressed in epididymis (at protein level).

The protein is Putative ubiquitin-conjugating enzyme E2 N-like (UBE2NL) of Homo sapiens (Human).